The following is a 154-amino-acid chain: MISTGIAAQNRKGRFNYTILETLEAGMVLKGPEVKSLRLGRATINEAYAGDRDGEIWLFNSYIPEYQGGVLSRFETRAPRKLLLHRKQVDKLLGAVARDGVTLVPLDIHFNARGVAKVTLGIGEGRKKADKRQAIADRDWQRDKARLLRNKGRE.

Belongs to the SmpB family.

The protein localises to the cytoplasm. Functionally, required for rescue of stalled ribosomes mediated by trans-translation. Binds to transfer-messenger RNA (tmRNA), required for stable association of tmRNA with ribosomes. tmRNA and SmpB together mimic tRNA shape, replacing the anticodon stem-loop with SmpB. tmRNA is encoded by the ssrA gene; the 2 termini fold to resemble tRNA(Ala) and it encodes a 'tag peptide', a short internal open reading frame. During trans-translation Ala-aminoacylated tmRNA acts like a tRNA, entering the A-site of stalled ribosomes, displacing the stalled mRNA. The ribosome then switches to translate the ORF on the tmRNA; the nascent peptide is terminated with the 'tag peptide' encoded by the tmRNA and targeted for degradation. The ribosome is freed to recommence translation, which seems to be the essential function of trans-translation. The chain is SsrA-binding protein from Gluconacetobacter diazotrophicus (strain ATCC 49037 / DSM 5601 / CCUG 37298 / CIP 103539 / LMG 7603 / PAl5).